The primary structure comprises 424 residues: Enolase (424 aa).

A (2R)-2-phosphoglycerate-binding site is contributed by Gln-162. The Proton donor role is filled by Glu-204. Asp-241, Glu-284, and Asp-311 together coordinate Mg(2+). (2R)-2-phosphoglycerate-binding residues include Lys-336, Arg-365, Ser-366, and Lys-387. Residue Lys-336 is the Proton acceptor of the active site.

It belongs to the enolase family. It depends on Mg(2+) as a cofactor.

The protein resides in the cytoplasm. It localises to the secreted. It is found in the cell surface. It catalyses the reaction (2R)-2-phosphoglycerate = phosphoenolpyruvate + H2O. It functions in the pathway carbohydrate degradation; glycolysis; pyruvate from D-glyceraldehyde 3-phosphate: step 4/5. Its function is as follows. Catalyzes the reversible conversion of 2-phosphoglycerate (2-PG) into phosphoenolpyruvate (PEP). It is essential for the degradation of carbohydrates via glycolysis. This chain is Enolase, found in Parvibaculum lavamentivorans (strain DS-1 / DSM 13023 / NCIMB 13966).